We begin with the raw amino-acid sequence, 398 residues long: Protein ELC (398 aa).

Positions 18–162 (ALSQRGPSSV…ARDPPLYSRR (145 aa)) constitute a UEV domain. Residues 157 to 202 (PLYSRRRPQPPPPSPPTVYDSSLSRPPSADQSLPRPFPPSPYGGGV) form a disordered region. Positions 175–187 (YDSSLSRPPSADQ) are enriched in polar residues. Residues 247-291 (EAEAEELLSLQAGLKRREDELNIGLKEMVEEKETLEQQLQIISMN) adopt a coiled-coil conformation. Positions 322-390 (DTLSKQMLEC…RAAQMEVQVA (69 aa)) constitute an SB domain.

The protein belongs to the ubiquitin-conjugating enzyme family. UEV subfamily. As to quaternary structure, component of the endosomal sorting required for transport complex I (ESCRT-I), composed of ELC, VPS28 and VPS37. Interacts with VPS28 and VPS37. Binds ubiquitin in vitro. Interacts with FREE1. Interacts with TOL9/TOM1D. Interacts with BRO1/ALIX. Interacts with SINAT1, SINAT2, SINAT3 and SINAT4. Ubiquitinated by SINAT1, SINAT2, SINAT3 and SINAT4 for subsequent proteasomal degradation. Expressed in roots, stems, leaves and flowers.

It localises to the early endosome. Its subcellular location is the late endosome. It is found in the prevacuolar compartment. Its function is as follows. Component of the ESCRT-I complex (endosomal sorting complex required for transport I), a regulator of vesicular trafficking process. Required for the sorting of endocytic ubiquitinated cargos into multivesicular bodies (MVBs). May control nuclear division through the microtubule cytoskeleton. This chain is Protein ELC, found in Arabidopsis thaliana (Mouse-ear cress).